The primary structure comprises 471 residues: MSQGTLFDKVWDLHTVDVLPSGQTQLFIGLHLIHEVTSPQAFTMLKDRGLNVLYPQRTVATVDHIVPTENQARPFADTLAEEMMQALEQSCQDHGITFHNIGSGKQGIVHVIAPEQGLTQPGMTIACGDSHTSTHGAFGAISFGIGTSQVRDVLASQTLALAKLKVRKVEVNGTLPAGVYAKDVILHIIRTLGVKGGVGYAYEFAGTTFEQMTMDERMTVCNMSIEGGARCGYVNPDTITFEYLKGREAAPKGADWDQAVAWWQSIRSDADAVYDDVVVFDAQDISPTVTWGITPGQGIGIDEAIPGLDHFTDADQPIASEAYKYMDLQPGQPIQGTKVDVCFIGSCTNGRISDLREAAQFAKGNQVAAGVKAFVVPGSEQVKQQAESEGLHHIFEQAGFEWREPGCSMCLAMNPDKLQGRQLSASSSNRNFKGRQGSASGRTLLMSPAMVVAAAIKGEVADVRQIPKASP.

Cys347, Cys407, and Cys410 together coordinate [4Fe-4S] cluster.

It belongs to the aconitase/IPM isomerase family. LeuC type 1 subfamily. Heterodimer of LeuC and LeuD. The cofactor is [4Fe-4S] cluster.

The catalysed reaction is (2R,3S)-3-isopropylmalate = (2S)-2-isopropylmalate. The protein operates within amino-acid biosynthesis; L-leucine biosynthesis; L-leucine from 3-methyl-2-oxobutanoate: step 2/4. Its function is as follows. Catalyzes the isomerization between 2-isopropylmalate and 3-isopropylmalate, via the formation of 2-isopropylmaleate. The protein is 3-isopropylmalate dehydratase large subunit of Acaryochloris marina (strain MBIC 11017).